We begin with the raw amino-acid sequence, 128 residues long: Iron-sulfur cluster insertion protein ErpA (128 aa).

Residues Cys-56, Cys-120, and Cys-122 each contribute to the iron-sulfur cluster site.

The protein belongs to the HesB/IscA family. As to quaternary structure, homodimer. It depends on iron-sulfur cluster as a cofactor.

In terms of biological role, required for insertion of 4Fe-4S clusters for at least IspG. The chain is Iron-sulfur cluster insertion protein ErpA from Xanthomonas euvesicatoria pv. vesicatoria (strain 85-10) (Xanthomonas campestris pv. vesicatoria).